The primary structure comprises 203 residues: Probable proteasome subunit beta type-1 (203 aa).

Positions 1–10 (MMSNEKEMTG) are cleaved as a propeptide — removed in mature form. Residue threonine 11 is the Nucleophile of the active site.

The protein belongs to the peptidase T1B family. The 26S proteasome consists of a 20S proteasome core and two 19S regulatory subunits. The 20S proteasome core is composed of 28 subunits that are arranged in four stacked rings, resulting in a barrel-shaped structure. The two end rings are each formed by seven alpha subunits, and the two central rings are each formed by seven beta subunits. The catalytic chamber with the active sites is on the inside of the barrel.

The protein localises to the cytoplasm. Its subcellular location is the nucleus. It carries out the reaction Cleavage of peptide bonds with very broad specificity.. In terms of biological role, the proteasome degrades poly-ubiquitinated proteins in the cytoplasm and in the nucleus. It is essential for the regulated turnover of proteins and for the removal of misfolded proteins. The proteasome is a multicatalytic proteinase complex that is characterized by its ability to cleave peptides with Arg, Phe, Tyr, Leu, and Glu adjacent to the leaving group at neutral or slightly basic pH. It has an ATP-dependent proteolytic activity. In Encephalitozoon cuniculi (strain GB-M1) (Microsporidian parasite), this protein is Probable proteasome subunit beta type-1 (PRE3).